The following is an 815-amino-acid chain: Probable beta-glucosidase G (815 aa).

The signal sequence occupies residues 1–20 (MASIAHLVVSGLLAATAVNG). Asn40, Asn58, Asn229, and Asn276 each carry an N-linked (GlcNAc...) asparagine glycan. The active site involves Asp304. Asn343, Asn350, Asn402, Asn507, Asn563, Asn584, Asn623, Asn662, and Asn715 each carry an N-linked (GlcNAc...) asparagine glycan.

This sequence belongs to the glycosyl hydrolase 3 family.

The protein localises to the secreted. It catalyses the reaction Hydrolysis of terminal, non-reducing beta-D-glucosyl residues with release of beta-D-glucose.. It participates in glycan metabolism; cellulose degradation. In terms of biological role, beta-glucosidases are one of a number of cellulolytic enzymes involved in the degradation of cellulosic biomass. Catalyzes the last step releasing glucose from the inhibitory cellobiose. This chain is Probable beta-glucosidase G (bglG), found in Aspergillus flavus (strain ATCC 200026 / FGSC A1120 / IAM 13836 / NRRL 3357 / JCM 12722 / SRRC 167).